A 279-amino-acid chain; its full sequence is L-ascorbate peroxidase 5, peroxisomal (279 aa).

Residue histidine 39 is the Proton acceptor of the active site. The interval 111–134 (PFTPGRKDADSADDGELPNPNEGA) is disordered. Histidine 158 serves as a coordination point for heme b. K(+) is bound by residues threonine 159, threonine 175, and aspartate 182. A helical membrane pass occupies residues 251–271 (AVTQQTLGIAVAAAVVIFTIC). The short motif at 272–279 (YEASRRGK) is the AKR2A-binding sequence (ABS) required for peroxisome membrane targeting element.

This sequence belongs to the peroxidase family. Ascorbate peroxidase subfamily. Interacts with AKR2A and AKR2B. Requires heme b as cofactor.

Its subcellular location is the peroxisome membrane. It carries out the reaction L-ascorbate + H2O2 = L-dehydroascorbate + 2 H2O. Plays a key role in hydrogen peroxide removal. In Arabidopsis thaliana (Mouse-ear cress), this protein is L-ascorbate peroxidase 5, peroxisomal (APX5).